Here is a 205-residue protein sequence, read N- to C-terminus: Heme ligase (205 aa).

Residues 48–203 enclose the FAS1 domain; it reads KRTIINLIYS…GVVHIVDKPI (156 aa). The interval 154 to 172 is required for binding to host hemoglobin; sequence LRNLLNNDLIVKIEGEFKH. Heme binding domain regions lie at residues 171–181 and 191–200; these read KHCNHSIYLNG and CHNGVVHIVD.

In terms of assembly, component of the hemozoin formation complex (HFC) composed of falcipains FP2A and/or FP2B, plasmepsins PMII, PMIII/HAP and PMIV, heme detoxifying protein HDP and falcilysin FLN. The HFC complex is involved in hemoglobin degradation and detoxification of heme in the food vacuole during the asexual blood stage. Interacts with falcipain 2; the interaction is direct and enhances HDP catalytic activity. Interacts with host hemoglobin.

The protein localises to the vacuole. The protein resides in the host cytoplasm. It is found in the host cytosol. The catalysed reaction is 2 Fe(III)-heme b = beta-hematin. In terms of biological role, heme detoxifying enzyme that converts heme to crystalline hemozoin (beta-hematin) to protect the organism from the toxic effects of heme. During its development, P.falciparum proteolyzes vast amounts of host hemoglobin, leading to heme release. The chain is Heme ligase from Plasmodium falciparum (isolate 3D7).